The sequence spans 237 residues: Ribonuclease PH (237 aa).

Phosphate is bound by residues arginine 86 and 124–126; that span reads GTR.

The protein belongs to the RNase PH family. Homohexameric ring arranged as a trimer of dimers.

The catalysed reaction is tRNA(n+1) + phosphate = tRNA(n) + a ribonucleoside 5'-diphosphate. In terms of biological role, phosphorolytic 3'-5' exoribonuclease that plays an important role in tRNA 3'-end maturation. Removes nucleotide residues following the 3'-CCA terminus of tRNAs; can also add nucleotides to the ends of RNA molecules by using nucleoside diphosphates as substrates, but this may not be physiologically important. Probably plays a role in initiation of 16S rRNA degradation (leading to ribosome degradation) during starvation. In Methylorubrum extorquens (strain PA1) (Methylobacterium extorquens), this protein is Ribonuclease PH.